The primary structure comprises 217 residues: Uracil-DNA glycosylase (217 aa).

Asp62 (proton acceptor) is an active-site residue.

It belongs to the uracil-DNA glycosylase (UDG) superfamily. UNG family.

Its subcellular location is the cytoplasm. It catalyses the reaction Hydrolyzes single-stranded DNA or mismatched double-stranded DNA and polynucleotides, releasing free uracil.. Functionally, excises uracil residues from the DNA which can arise as a result of misincorporation of dUMP residues by DNA polymerase or due to deamination of cytosine. The sequence is that of Uracil-DNA glycosylase from Streptococcus pyogenes serotype M4 (strain MGAS10750).